The sequence spans 391 residues: MSRVGVVLLNLGGPERIQDVGPFLFNLFADPEIIRLPIPALQKPLAWLISTLRSGKSQEAYRSIGGGSPLRRITEQQARELQSLLRQRGIDATSYVAMRYWHPFTESAVADLKADGMDQVVVLPLYPHFSISTSGSSFRELQRLRQGDESFEKLPIRCIRSWFDHPGYVRAMAELIAEEVRQSDDPTQAHVFFSAHGVPKSYVEEAGDPYQKEIESCTDLIMKELGQLMGHDNPFTLAYQSRVGPVEWLKPYTEEALEELGKAKTNDLVVVPISFVSEHIETLEEIDIEYRELATEAGVVNFRRVRALDTYPPFIEGLADLVTTSLEGPEVSLDAAAELPTKVKLYPQEKWEWGWNNSSEVWNGRLAMLGFSGFLLELISGHGPLHALGLL.

The Fe cation site is built by H196 and E281.

Belongs to the ferrochelatase family.

It localises to the cytoplasm. It catalyses the reaction heme b + 2 H(+) = protoporphyrin IX + Fe(2+). It functions in the pathway porphyrin-containing compound metabolism; protoheme biosynthesis; protoheme from protoporphyrin-IX: step 1/1. In terms of biological role, catalyzes the ferrous insertion into protoporphyrin IX. In Synechococcus sp. (strain WH7803), this protein is Ferrochelatase.